Here is a 284-residue protein sequence, read N- to C-terminus: 2-dehydro-3-deoxyphosphooctonate aldolase (284 aa).

It belongs to the KdsA family.

The protein resides in the cytoplasm. It carries out the reaction D-arabinose 5-phosphate + phosphoenolpyruvate + H2O = 3-deoxy-alpha-D-manno-2-octulosonate-8-phosphate + phosphate. The protein operates within carbohydrate biosynthesis; 3-deoxy-D-manno-octulosonate biosynthesis; 3-deoxy-D-manno-octulosonate from D-ribulose 5-phosphate: step 2/3. It functions in the pathway bacterial outer membrane biogenesis; lipopolysaccharide biosynthesis. This is 2-dehydro-3-deoxyphosphooctonate aldolase from Methylobacterium radiotolerans (strain ATCC 27329 / DSM 1819 / JCM 2831 / NBRC 15690 / NCIMB 10815 / 0-1).